The primary structure comprises 74 residues: Exodeoxyribonuclease 7 small subunit (74 aa).

The protein belongs to the XseB family. Heterooligomer composed of large and small subunits.

It is found in the cytoplasm. The enzyme catalyses Exonucleolytic cleavage in either 5'- to 3'- or 3'- to 5'-direction to yield nucleoside 5'-phosphates.. Bidirectionally degrades single-stranded DNA into large acid-insoluble oligonucleotides, which are then degraded further into small acid-soluble oligonucleotides. The protein is Exodeoxyribonuclease 7 small subunit of Ruthia magnifica subsp. Calyptogena magnifica.